Here is a 319-residue protein sequence, read N- to C-terminus: MSDSIQERYLVGYALAAKKQHSFIQPSLIEHSRQRGIDLVKLDPTKSLLEQGKLDCIIHKLYDVYWKENLHEFREKCPGVPVIDLPEAIERLHNRVSMLEVITQLRFPVSDSERFGVPEQVVVMDSSVLSGGGALGELKFPVIAKPLDADGSAKSHKMFLIYDQEGMKILKAPIVLQEFVNHGGVIFKVYVVGDHVKCVKRRSLPDISEEKIGTSKGSLPFSQISNLTAQEDKNIEYGEDRSLEKVEMPPLSFLTDLAKAMRESMGLNLFNFDVIRDAKDANRYLIIDINYFPGYAKMPSYEPVLTEFFWDMVTKKNHV.

Ser2 is modified (N-acetylserine). The 1D-myo-inositol 1,3,4-trisphosphate site is built by Lys18 and Lys60. 2 residues coordinate ATP: Arg95 and Lys145. The region spanning 99-318 (LEVITQLRFP…FWDMVTKKNH (220 aa)) is the ATP-grasp domain. His156 and Lys188 together coordinate 1D-myo-inositol 1,3,4-trisphosphate. Residues 177-188 (QEFVNHGGVIFK) and Ser203 each bind ATP. Asp273, Asp288, and Asn290 together coordinate Mg(2+). A 1D-myo-inositol 1,3,4-trisphosphate-binding site is contributed by Asn290.

Belongs to the ITPK1 family. In terms of assembly, monomer. Mg(2+) serves as cofactor. In terms of tissue distribution, expressed in siliques.

The catalysed reaction is 1D-myo-inositol 3,4,5,6-tetrakisphosphate + ATP = 1D-myo-inositol 1,3,4,5,6-pentakisphosphate + ADP + H(+). It carries out the reaction 1D-myo-inositol 1,3,4-trisphosphate + ATP = 1D-myo-inositol 1,3,4,5-tetrakisphosphate + ADP + H(+). The enzyme catalyses 1D-myo-inositol 1,3,4-trisphosphate + ATP = 1D-myo-inositol 1,3,4,6-tetrakisphosphate + ADP + H(+). Kinase that can phosphorylate various inositol polyphosphate such as Ins(3,4,5,6)P4 or Ins(1,3,4)P3. Phosphorylates Ins(3,4,5,6)P4 at position 1 to form Ins(1,3,4,5,6)P5. This reaction is thought to have regulatory importance, since Ins(3,4,5,6)P4 is an inhibitor of plasma membrane Ca(2+)-activated Cl(-) channels, while Ins(1,3,4,5,6)P5 is not. Also phosphorylates Ins(1,3,4)P3 on O-5 and O-6 to form Ins(1,3,4,6)P4, an essential molecule in the hexakisphosphate (InsP6) pathway. This is Inositol-tetrakisphosphate 1-kinase 1 (ITPK1) from Arabidopsis thaliana (Mouse-ear cress).